Consider the following 533-residue polypeptide: D-3-phosphoglycerate dehydrogenase (533 aa).

Ala2 carries the post-translational modification N-acetylalanine. A Phosphoserine modification is found at Ser14. Lys21 carries the N6-acetyllysine; alternate modification. Lys21 participates in a covalent cross-link: Glycyl lysine isopeptide (Lys-Gly) (interchain with G-Cter in SUMO1); alternate. Residue Lys21 forms a Glycyl lysine isopeptide (Lys-Gly) (interchain with G-Cter in SUMO2); alternate linkage. Residue Lys58 is modified to N6-acetyllysine. Residues Thr78, 155-156, Asp175, Thr207, 234-236, and Asp260 contribute to the NAD(+) site; these read RI and CAR. Residue Thr78 is modified to Phosphothreonine. Arg236 is an active-site residue. The active site involves Glu265. His283 functions as the Proton donor in the catalytic mechanism. 283–286 provides a ligand contact to NAD(+); that stretch reads HLGA.

Belongs to the D-isomer specific 2-hydroxyacid dehydrogenase family. Homotetramer. Liver, kidney, brain, testis.

It catalyses the reaction (2R)-3-phosphoglycerate + NAD(+) = 3-phosphooxypyruvate + NADH + H(+). It functions in the pathway amino-acid biosynthesis; L-serine biosynthesis; L-serine from 3-phospho-D-glycerate: step 1/3. Catalyzes the reversible oxidation of 3-phospho-D-glycerate to 3-phosphonooxypyruvate, the first step of the phosphorylated L-serine biosynthesis pathway. Does not catalyze the reversible oxidation of 2-hydroxyglutarate to 2-oxoglutarate and the reversible oxidation of (S)-malate to oxaloacetate. The protein is D-3-phosphoglycerate dehydrogenase (Phgdh) of Rattus norvegicus (Rat).